Consider the following 1241-residue polypeptide: ATP-dependent helicase/nuclease subunit A (1241 aa).

Residues 12-485 (SQWTDDQWKA…IDLAKNFRSR (474 aa)) form the UvrD-like helicase ATP-binding domain. An ATP-binding site is contributed by 33–40 (AAAGSGKT). One can recognise a UvrD-like helicase C-terminal domain in the interval 505–805 (GEIDYDADAE…RIMTIHKSKG (301 aa)).

The protein belongs to the helicase family. AddA subfamily. As to quaternary structure, heterodimer of AddA and AddB/RexB. It depends on Mg(2+) as a cofactor.

The catalysed reaction is Couples ATP hydrolysis with the unwinding of duplex DNA by translocating in the 3'-5' direction.. It carries out the reaction ATP + H2O = ADP + phosphate + H(+). The heterodimer acts as both an ATP-dependent DNA helicase and an ATP-dependent, dual-direction single-stranded exonuclease. Recognizes the chi site generating a DNA molecule suitable for the initiation of homologous recombination. The AddA nuclease domain is required for chi fragment generation; this subunit has the helicase and 3' -&gt; 5' nuclease activities. In Bacillus anthracis, this protein is ATP-dependent helicase/nuclease subunit A.